A 212-amino-acid chain; its full sequence is Golgi SNAP receptor complex member 2 (212 aa).

Position 1 is an N-acetylmethionine (Met1). The Cytoplasmic segment spans residues 1–190 (MDPLFQQTHK…LIEKRAFQDK (190 aa)). Residues 61–107 (NKRQNARLRVDQLKYDVQHLQTALRNFQHRRHAREQQERQREELLSR) are a coiled coil. An IxM motif; signal for cargo packaging into COPII-coated vesicles motif is present at residues 118–120 (IPM). A helical; Anchor for type IV membrane protein transmembrane segment spans residues 191–211 (YFMIGGMLLTCVVMFLVVQYL). Thr212 is a topological domain (vesicular).

This sequence belongs to the GOSR2 family. Part of a unique SNARE complex composed of the Golgi SNAREs GOSR1, STX5 and YKT6. Interacts (via IxM motif) with SEC24C and SEC24D; mediates GOSR2 packaging into COPII-coated vesicles. Interacts with BET1.

It is found in the golgi apparatus. It localises to the cis-Golgi network membrane. The protein resides in the golgi apparatus membrane. The protein localises to the endoplasmic reticulum membrane. Functionally, involved in transport of proteins from the cis/medial-Golgi to the trans-Golgi network. This is Golgi SNAP receptor complex member 2 (GOSR2) from Homo sapiens (Human).